Reading from the N-terminus, the 473-residue chain is ATP synthase subunit beta (473 aa).

158–165 (GGAGVGKT) contacts ATP.

Belongs to the ATPase alpha/beta chains family. F-type ATPases have 2 components, CF(1) - the catalytic core - and CF(0) - the membrane proton channel. CF(1) has five subunits: alpha(3), beta(3), gamma(1), delta(1), epsilon(1). CF(0) has three main subunits: a(1), b(2) and c(9-12). The alpha and beta chains form an alternating ring which encloses part of the gamma chain. CF(1) is attached to CF(0) by a central stalk formed by the gamma and epsilon chains, while a peripheral stalk is formed by the delta and b chains.

The protein localises to the cell membrane. The enzyme catalyses ATP + H2O + 4 H(+)(in) = ADP + phosphate + 5 H(+)(out). Functionally, produces ATP from ADP in the presence of a proton gradient across the membrane. The catalytic sites are hosted primarily by the beta subunits. This chain is ATP synthase subunit beta, found in Geobacillus sp. (strain WCH70).